Consider the following 231-residue polypeptide: uncharacterized protein (231 aa).

The helical transmembrane segment at 86–106 (LIILFVIGLIITIIGLLMYEP) threads the bilayer.

The protein localises to the membrane. This is an uncharacterized protein from Methanocaldococcus jannaschii (strain ATCC 43067 / DSM 2661 / JAL-1 / JCM 10045 / NBRC 100440) (Methanococcus jannaschii).